We begin with the raw amino-acid sequence, 73 residues long: uncharacterized protein (73 aa).

This is an uncharacterized protein from Invertebrate iridescent virus 6 (IIV-6).